Reading from the N-terminus, the 142-residue chain is Large ribosomal subunit protein uL11 (142 aa).

It belongs to the universal ribosomal protein uL11 family. In terms of assembly, part of the ribosomal stalk of the 50S ribosomal subunit. Interacts with L10 and the large rRNA to form the base of the stalk. L10 forms an elongated spine to which L12 dimers bind in a sequential fashion forming a multimeric L10(L12)X complex. One or more lysine residues are methylated.

Its function is as follows. Forms part of the ribosomal stalk which helps the ribosome interact with GTP-bound translation factors. This chain is Large ribosomal subunit protein uL11, found in Xanthomonas axonopodis pv. citri (strain 306).